We begin with the raw amino-acid sequence, 334 residues long: Mediator of RNA polymerase II transcription subunit 4 (334 aa).

Residues 71–100 (QEREQLIRTLEAHVEKRDEVIQQLETNLKS) are a coiled coil. The segment at 193-334 (PLITSPSASS…ASKKTGSSNK (142 aa)) is disordered. 2 stretches are compositionally biased toward polar residues: residues 194 to 206 (LITS…SNGG) and 251 to 282 (NEKQ…SSPN).

Belongs to the Mediator complex subunit 4 family. In terms of assembly, component of the Mediator complex.

Its subcellular location is the nucleus. Component of the Mediator complex, a coactivator involved in the regulated transcription of nearly all RNA polymerase II-dependent genes. Mediator functions as a bridge to convey information from gene-specific regulatory proteins to the basal RNA polymerase II transcription machinery. Mediator is recruited to promoters by direct interactions with regulatory proteins and serves as a scaffold for the assembly of a functional preinitiation complex with RNA polymerase II and the general transcription factors. This Caenorhabditis elegans protein is Mediator of RNA polymerase II transcription subunit 4 (mdt-4).